The following is a 275-amino-acid chain: Holocytochrome c-type synthase (275 aa).

Disordered regions lie at residues methionine 1–serine 59 and lysine 83–aspartate 102. Residue glycine 2 is the site of N-myristoyl glycine attachment. The span at alanine 9–proline 28 shows a compositional bias: polar residues. HRM repeat units follow at residues glycine 31 to glutamate 36 and glycine 41 to alanine 46. The segment covering proline 48–serine 59 has biased composition (polar residues). Residues leucine 91 to aspartate 102 show a composition bias toward pro residues.

It belongs to the cytochrome c-type heme lyase family.

The protein localises to the mitochondrion inner membrane. It localises to the membrane. The enzyme catalyses holo-[cytochrome c] = apo-[cytochrome c] + heme b. Lyase that catalyzes the covalent linking of the heme group to the cytochrome C apoprotein to produce the mature functional cytochrome. This chain is Holocytochrome c-type synthase, found in Bos taurus (Bovine).